The chain runs to 132 residues: MKKHGHLNRDIARILASMGHTDSLVIADCGLPIPPGVECVDLSLKLGQPGFIETLDSILADFQCERAVFAIECRQHNPAVQDKAERMAQAGAALDFVSHEEFKQRCQAARAVIRTGECTPYANVILHSGVIF.

Residue His-20 is the Proton donor of the active site. Residues Asp-28, His-99, and 121 to 123 (YAN) each bind substrate.

It belongs to the RbsD / FucU family. RbsD subfamily. As to quaternary structure, homodecamer.

It is found in the cytoplasm. It carries out the reaction beta-D-ribopyranose = beta-D-ribofuranose. Its pathway is carbohydrate metabolism; D-ribose degradation; D-ribose 5-phosphate from beta-D-ribopyranose: step 1/2. In terms of biological role, catalyzes the interconversion of beta-pyran and beta-furan forms of D-ribose. This is D-ribose pyranase from Chromobacterium violaceum (strain ATCC 12472 / DSM 30191 / JCM 1249 / CCUG 213 / NBRC 12614 / NCIMB 9131 / NCTC 9757 / MK).